Consider the following 199-residue polypeptide: ATP-dependent Clp protease proteolytic subunit 3 (199 aa).

Ser-101 functions as the Nucleophile in the catalytic mechanism. The active site involves His-126.

The protein belongs to the peptidase S14 family. As to quaternary structure, fourteen ClpP subunits assemble into 2 heptameric rings which stack back to back to give a disk-like structure with a central cavity, resembling the structure of eukaryotic proteasomes.

It localises to the cytoplasm. It carries out the reaction Hydrolysis of proteins to small peptides in the presence of ATP and magnesium. alpha-casein is the usual test substrate. In the absence of ATP, only oligopeptides shorter than five residues are hydrolyzed (such as succinyl-Leu-Tyr-|-NHMec, and Leu-Tyr-Leu-|-Tyr-Trp, in which cleavage of the -Tyr-|-Leu- and -Tyr-|-Trp bonds also occurs).. Functionally, cleaves peptides in various proteins in a process that requires ATP hydrolysis. Has a chymotrypsin-like activity. Plays a major role in the degradation of misfolded proteins. The sequence is that of ATP-dependent Clp protease proteolytic subunit 3 from Synechococcus elongatus (strain ATCC 33912 / PCC 7942 / FACHB-805) (Anacystis nidulans R2).